Here is a 274-residue protein sequence, read N- to C-terminus: Large ribosomal subunit protein uL2 (274 aa).

The tract at residues 223 to 274 (VAMNPVDHPHGGGEGRTSGGRHPVTPWGVPTKGYKTRSNKRTDKYIVRRRNK) is disordered.

The protein belongs to the universal ribosomal protein uL2 family. In terms of assembly, part of the 50S ribosomal subunit. Forms a bridge to the 30S subunit in the 70S ribosome.

Its function is as follows. One of the primary rRNA binding proteins. Required for association of the 30S and 50S subunits to form the 70S ribosome, for tRNA binding and peptide bond formation. It has been suggested to have peptidyltransferase activity; this is somewhat controversial. Makes several contacts with the 16S rRNA in the 70S ribosome. This chain is Large ribosomal subunit protein uL2, found in Shewanella baltica (strain OS223).